Here is a 259-residue protein sequence, read N- to C-terminus: Thiazole synthase (259 aa).

The active-site Schiff-base intermediate with DXP is the Lys-98. Residues Gly-159, 185-186 (AG), and 207-208 (NS) contribute to the 1-deoxy-D-xylulose 5-phosphate site.

This sequence belongs to the ThiG family. In terms of assembly, homotetramer. Forms heterodimers with either ThiH or ThiS.

It is found in the cytoplasm. It catalyses the reaction [ThiS sulfur-carrier protein]-C-terminal-Gly-aminoethanethioate + 2-iminoacetate + 1-deoxy-D-xylulose 5-phosphate = [ThiS sulfur-carrier protein]-C-terminal Gly-Gly + 2-[(2R,5Z)-2-carboxy-4-methylthiazol-5(2H)-ylidene]ethyl phosphate + 2 H2O + H(+). It participates in cofactor biosynthesis; thiamine diphosphate biosynthesis. Its function is as follows. Catalyzes the rearrangement of 1-deoxy-D-xylulose 5-phosphate (DXP) to produce the thiazole phosphate moiety of thiamine. Sulfur is provided by the thiocarboxylate moiety of the carrier protein ThiS. In vitro, sulfur can be provided by H(2)S. The sequence is that of Thiazole synthase from Chlorobium phaeobacteroides (strain BS1).